Here is a 623-residue protein sequence, read N- to C-terminus: uncharacterized protein (623 aa).

5 consecutive transmembrane segments (helical) span residues 242 to 262 (IVLA…ITWL), 288 to 308 (IVSP…LDIF), 318 to 338 (VSMW…IALF), 361 to 381 (VINL…LLGV), and 387 to 407 (FNVS…ALAV).

It belongs to the MscS (TC 1.A.23) family.

Its subcellular location is the cell membrane. This is an uncharacterized protein from Helicobacter pylori (strain ATCC 700392 / 26695) (Campylobacter pylori).